The primary structure comprises 273 residues: MVVALVGSAIVDLHSRPPWSNNAVRRLGVALRDGVDPPVDCPSYAEVMLWHADLAAEVQDRIEGRSWSASELLVTSRAKSQDTLLAKLRRRPYLQLNTIQDIAGVRIDADLLLGEQTRLAREIADHFGADQPAIHDLRDHPHAGYRAVHVWLRLPAGRVEIQIRTILQSLWANFYELLADAYGRGIRYDERPEQLAAGVVPAQLQELVGVMQDASADLAMHEAEWQHCAEIEYPGQRAMALGEASKNKATVLATTKFRLERAINEAESAGGGG.

This is an uncharacterized protein from Mycobacterium bovis (strain ATCC BAA-935 / AF2122/97).